A 145-amino-acid chain; its full sequence is D-aminoacyl-tRNA deacylase (145 aa).

The short motif at 137-138 (GP) is the Gly-cisPro motif, important for rejection of L-amino acids element.

The protein belongs to the DTD family. In terms of assembly, homodimer.

The protein localises to the cytoplasm. The enzyme catalyses glycyl-tRNA(Ala) + H2O = tRNA(Ala) + glycine + H(+). It catalyses the reaction a D-aminoacyl-tRNA + H2O = a tRNA + a D-alpha-amino acid + H(+). Its function is as follows. An aminoacyl-tRNA editing enzyme that deacylates mischarged D-aminoacyl-tRNAs. Also deacylates mischarged glycyl-tRNA(Ala), protecting cells against glycine mischarging by AlaRS. Acts via tRNA-based rather than protein-based catalysis; rejects L-amino acids rather than detecting D-amino acids in the active site. By recycling D-aminoacyl-tRNA to D-amino acids and free tRNA molecules, this enzyme counteracts the toxicity associated with the formation of D-aminoacyl-tRNA entities in vivo and helps enforce protein L-homochirality. In Photorhabdus laumondii subsp. laumondii (strain DSM 15139 / CIP 105565 / TT01) (Photorhabdus luminescens subsp. laumondii), this protein is D-aminoacyl-tRNA deacylase.